Consider the following 287-residue polypeptide: Pyridoxal kinase PdxY (287 aa).

Residues serine 10 and 45–46 (TQ) contribute to the substrate site. Residues aspartate 112, alanine 144, glutamate 149, lysine 182, and 209 to 212 (RPLV) contribute to the ATP site. Residue aspartate 224 participates in substrate binding.

Belongs to the pyridoxine kinase family. PdxY subfamily. Homodimer. Mg(2+) serves as cofactor.

It carries out the reaction pyridoxal + ATP = pyridoxal 5'-phosphate + ADP + H(+). The protein operates within cofactor metabolism; pyridoxal 5'-phosphate salvage; pyridoxal 5'-phosphate from pyridoxal: step 1/1. Its function is as follows. Pyridoxal kinase involved in the salvage pathway of pyridoxal 5'-phosphate (PLP). Catalyzes the phosphorylation of pyridoxal to PLP. This chain is Pyridoxal kinase PdxY, found in Escherichia coli O6:H1 (strain CFT073 / ATCC 700928 / UPEC).